A 517-amino-acid chain; its full sequence is Tyrosine-protein kinase Src42A (517 aa).

The tract at residues 1–47 (MGNCLTTQKGEPDKPADRIKLDDPPTIGVGVGVPQIPMPSHAGQPPE) is disordered. Residues 10 to 23 (GEPDKPADRIKLDD) are compositionally biased toward basic and acidic residues. The SH3 domain maps to 63–124 (ANAKIFVALY…PSNYVAKLKS (62 aa)). Residues 130-222 (WYFRKIKRIE…GLCVNLCKPC (93 aa)) form the SH2 domain. The 257-residue stretch at 248 to 504 (LKFVRKLGSG…TLQWKLEDFY (257 aa)) folds into the Protein kinase domain. ATP-binding positions include 254 to 262 (LGSGQFGDV) and Lys-276. Asp-370 serves as the catalytic Proton acceptor.

The protein belongs to the protein kinase superfamily. Tyr protein kinase family. SRC subfamily. As to expression, ubiquitous in early embryos, in stages 13-16 expression is seen in visceral mesoderm, hindgut, brain, anal pads and ventral ganglions. In larvae, expression is in CNS, wing disk, leg disk and photoreceptor precursors in the eye-antenna disks posterior to the morphogenetic furrow.

The catalysed reaction is L-tyrosyl-[protein] + ATP = O-phospho-L-tyrosyl-[protein] + ADP + H(+). Functionally, required directly or indirectly for the phosphorylation of drpr which is necessary for the interaction of drpr with shark and subsequent glial phagocytic activity. Together with drpr and shark, promotes the migration of macrophages to sites of wounding as part of a signaling cascade where Src42A detects production of hydrogen peroxide at wound sites which triggers phosphorylation of drpr and subsequent recruitment and activation of shark. Essential for correct eye morphogenesis (ommatidial R7 neuron formation) which requires the Ras1/MAPK signal transduction pathway. May be involved in the regulation of cytoskeleton organization and cell-cell contacts in developing ommatidia. Involved in phosphorylation of Dscam1, a cell surface receptor involved in targeting of growing axons during eye morphogenesis, and its interaction partner the SH2/SH3 adapter protein dock/dreadlocks. During embryogenesis, involved in regulation of dorsal closure where it may have a role in activating the JNK pathway in leading edge cells during this process. The protein is Tyrosine-protein kinase Src42A of Drosophila melanogaster (Fruit fly).